We begin with the raw amino-acid sequence, 162 residues long: Ribosome-binding factor A (162 aa).

Positions 121–162 (DEVARVAAGASPAGDPDPYKEPRAEDADDAEVDEPSGSRQAD) are disordered. Positions 125-136 (RVAAGASPAGDP) are enriched in low complexity.

Belongs to the RbfA family. In terms of assembly, monomer. Binds 30S ribosomal subunits, but not 50S ribosomal subunits or 70S ribosomes.

It is found in the cytoplasm. One of several proteins that assist in the late maturation steps of the functional core of the 30S ribosomal subunit. Associates with free 30S ribosomal subunits (but not with 30S subunits that are part of 70S ribosomes or polysomes). Required for efficient processing of 16S rRNA. May interact with the 5'-terminal helix region of 16S rRNA. This chain is Ribosome-binding factor A, found in Rhodococcus jostii (strain RHA1).